Reading from the N-terminus, the 316-residue chain is Acetyl-coenzyme A carboxylase carboxyl transferase subunit alpha (316 aa).

The region spanning 39-293 (KLEEKNAQLT…KKHLQANLTN (255 aa)) is the CoA carboxyltransferase C-terminal domain.

Belongs to the AccA family. As to quaternary structure, acetyl-CoA carboxylase is a heterohexamer composed of biotin carboxyl carrier protein (AccB), biotin carboxylase (AccC) and two subunits each of ACCase subunit alpha (AccA) and ACCase subunit beta (AccD).

The protein localises to the cytoplasm. The enzyme catalyses N(6)-carboxybiotinyl-L-lysyl-[protein] + acetyl-CoA = N(6)-biotinyl-L-lysyl-[protein] + malonyl-CoA. The protein operates within lipid metabolism; malonyl-CoA biosynthesis; malonyl-CoA from acetyl-CoA: step 1/1. Functionally, component of the acetyl coenzyme A carboxylase (ACC) complex. First, biotin carboxylase catalyzes the carboxylation of biotin on its carrier protein (BCCP) and then the CO(2) group is transferred by the carboxyltransferase to acetyl-CoA to form malonyl-CoA. This chain is Acetyl-coenzyme A carboxylase carboxyl transferase subunit alpha, found in Coxiella burnetii (strain CbuK_Q154) (Coxiella burnetii (strain Q154)).